Reading from the N-terminus, the 127-residue chain is Fluoride-specific ion channel FluC 2 (127 aa).

4 helical membrane-spanning segments follow: residues 4-24 (IIAITGFAMLGGGLREGLSLL), 31-51 (FWITCLINIVGAFVLSLITNL), 62-82 (IVIGMSVGFVGSFTTFSTFTF), and 94-114 (VLALSYVAASLGLGLLAGLAG). Residues G72 and T75 each coordinate Na(+).

This sequence belongs to the fluoride channel Fluc/FEX (TC 1.A.43) family.

It localises to the cell membrane. It carries out the reaction fluoride(in) = fluoride(out). With respect to regulation, na(+) is not transported, but it plays an essential structural role and its presence is essential for fluoride channel function. In terms of biological role, fluoride-specific ion channel. Important for reducing fluoride concentration in the cell, thus reducing its toxicity. This Lactiplantibacillus plantarum (strain ATCC BAA-793 / NCIMB 8826 / WCFS1) (Lactobacillus plantarum) protein is Fluoride-specific ion channel FluC 2.